Consider the following 457-residue polypeptide: tRNA-2-methylthio-N(6)-dimethylallyladenosine synthase (457 aa).

The MTTase N-terminal domain maps to 3-120 (KKVYVKTFGC…LPQMIDARRT (118 aa)). Cys12, Cys49, Cys83, Cys157, Cys161, and Cys164 together coordinate [4Fe-4S] cluster. Residues 143–377 (RVEGPTAFVS…QATIEENVAR (235 aa)) enclose the Radical SAM core domain. Positions 380 to 447 (QSMVGKVERI…PHSLRGELVL (68 aa)) constitute a TRAM domain.

The protein belongs to the methylthiotransferase family. MiaB subfamily. As to quaternary structure, monomer. It depends on [4Fe-4S] cluster as a cofactor.

It localises to the cytoplasm. It catalyses the reaction N(6)-dimethylallyladenosine(37) in tRNA + (sulfur carrier)-SH + AH2 + 2 S-adenosyl-L-methionine = 2-methylsulfanyl-N(6)-dimethylallyladenosine(37) in tRNA + (sulfur carrier)-H + 5'-deoxyadenosine + L-methionine + A + S-adenosyl-L-homocysteine + 2 H(+). In terms of biological role, catalyzes the methylthiolation of N6-(dimethylallyl)adenosine (i(6)A), leading to the formation of 2-methylthio-N6-(dimethylallyl)adenosine (ms(2)i(6)A) at position 37 in tRNAs that read codons beginning with uridine. This chain is tRNA-2-methylthio-N(6)-dimethylallyladenosine synthase, found in Burkholderia multivorans (strain ATCC 17616 / 249).